Reading from the N-terminus, the 315-residue chain is Prephenate dehydratase (315 aa).

The region spanning 3–189 is the Prephenate dehydratase domain; the sequence is RIAYLGPEGT…ARTRFLLIGV (187 aa). The ACT domain occupies 203 to 280; it reads SAVLRIANVP…ADVRYLGSWP (78 aa).

As to quaternary structure, homodimer.

The catalysed reaction is prephenate + H(+) = 3-phenylpyruvate + CO2 + H2O. It functions in the pathway amino-acid biosynthesis; L-phenylalanine biosynthesis; phenylpyruvate from prephenate: step 1/1. The protein is Prephenate dehydratase (pheA) of Mycobacterium ulcerans (strain Agy99).